The primary structure comprises 360 residues: Phospho-N-acetylmuramoyl-pentapeptide-transferase (360 aa).

Helical transmembrane passes span 27–47 (IVSLLTALAIALWMGPRMIAF), 71–91 (TPTMGGLLILLSITISTLLWV), 94–114 (NNPYVWCVLIVLIGYGIVGFV), 132–152 (WKYFWQSVLALGVAFAMYSFG), 168–188 (VMPQLGVLYILLTYFVIVGTS), 199–219 (GLAIMPTVFVAAGFALVAWAT), 236–256 (AGELVIVCTAIVGAGLGFLWF), 263–283 (VFMGDVGSLALGGALGTIAVL), 288–308 (FLLVIMGGVFVVETLSVILQV), and 338–358 (VIVRFWIISLMLVLIGLATLK).

This sequence belongs to the glycosyltransferase 4 family. MraY subfamily. The cofactor is Mg(2+).

It localises to the cell inner membrane. It carries out the reaction UDP-N-acetyl-alpha-D-muramoyl-L-alanyl-gamma-D-glutamyl-meso-2,6-diaminopimeloyl-D-alanyl-D-alanine + di-trans,octa-cis-undecaprenyl phosphate = di-trans,octa-cis-undecaprenyl diphospho-N-acetyl-alpha-D-muramoyl-L-alanyl-D-glutamyl-meso-2,6-diaminopimeloyl-D-alanyl-D-alanine + UMP. It functions in the pathway cell wall biogenesis; peptidoglycan biosynthesis. Functionally, catalyzes the initial step of the lipid cycle reactions in the biosynthesis of the cell wall peptidoglycan: transfers peptidoglycan precursor phospho-MurNAc-pentapeptide from UDP-MurNAc-pentapeptide onto the lipid carrier undecaprenyl phosphate, yielding undecaprenyl-pyrophosphoryl-MurNAc-pentapeptide, known as lipid I. The protein is Phospho-N-acetylmuramoyl-pentapeptide-transferase of Photorhabdus laumondii subsp. laumondii (strain DSM 15139 / CIP 105565 / TT01) (Photorhabdus luminescens subsp. laumondii).